A 142-amino-acid chain; its full sequence is Transcription antitermination protein NusB (142 aa).

Belongs to the NusB family.

Its function is as follows. Involved in transcription antitermination. Required for transcription of ribosomal RNA (rRNA) genes. Binds specifically to the boxA antiterminator sequence of the ribosomal RNA (rrn) operons. This Thermotoga petrophila (strain ATCC BAA-488 / DSM 13995 / JCM 10881 / RKU-1) protein is Transcription antitermination protein NusB.